We begin with the raw amino-acid sequence, 738 residues long: Putative RNA-binding protein EEED8.10 (738 aa).

The RRM domain maps to 112 to 201 (RKIVVSNISA…QVMVVSAYVS (90 aa)). Residues 211 to 237 (LSDDVGSREDTPLSRASSTQSLASGSE) are disordered. Residues 224–237 (SRASSTQSLASGSE) are compositionally biased toward polar residues. An F-box domain is found at 239-297 (SFNLGNVPDKILRRVISFLPIHETIRLERVNKKFMEESIKSWELVNKIALARETVFNKQ).

The chain is Putative RNA-binding protein EEED8.10 from Caenorhabditis elegans.